We begin with the raw amino-acid sequence, 265 residues long: 3-methyl-2-oxobutanoate hydroxymethyltransferase (265 aa).

Mg(2+) contacts are provided by Asp43 and Asp82. 3-methyl-2-oxobutanoate is bound by residues 43-44, Asp82, and Lys111; that span reads DS. Glu113 serves as a coordination point for Mg(2+). Residue Glu180 is the Proton acceptor of the active site.

Belongs to the PanB family. Homodecamer; pentamer of dimers. Mg(2+) is required as a cofactor.

It is found in the cytoplasm. It catalyses the reaction 3-methyl-2-oxobutanoate + (6R)-5,10-methylene-5,6,7,8-tetrahydrofolate + H2O = 2-dehydropantoate + (6S)-5,6,7,8-tetrahydrofolate. It functions in the pathway cofactor biosynthesis; (R)-pantothenate biosynthesis; (R)-pantoate from 3-methyl-2-oxobutanoate: step 1/2. Catalyzes the reversible reaction in which hydroxymethyl group from 5,10-methylenetetrahydrofolate is transferred onto alpha-ketoisovalerate to form ketopantoate. This chain is 3-methyl-2-oxobutanoate hydroxymethyltransferase, found in Francisella tularensis subsp. mediasiatica (strain FSC147).